A 204-amino-acid chain; its full sequence is MAVPKEVSFLASLLVLGILLLHVDAKACSQRNAKEPICTNCCAGRKGCNYYSADGTFICEGESDPNNPKPCTLNCDPRIFYSKCPRSEGNAENRICTNCCAGRKGCNYYSADGTFICEGESDPNNPKPCTLNCDPRIFYSKCPRSEASAEQPICTNCCAGLKGCNYYNADGTFICEGESDPNHPKACPKNCDPNIAYSLCLYEK.

The N-terminal stretch at 1–25 (MAVPKEVSFLASLLVLGILLLHVDA) is a signal peptide. Repeat copies occupy residues 25-67 (AKAC…DPNN), 68-125 (PKPC…DPNN), and 126-183 (PKPC…DPNH). 6 cysteine pairs are disulfide-bonded: Cys-28–Cys-100, Cys-38–Cys-75, Cys-41–Cys-59, Cys-42–Cys-71, Cys-48–Cys-84, and Cys-99–Cys-117. One copy of the 4; truncated repeat lies at 184–204 (PKACPKNCDPNIAYSLCLYEK).

It belongs to the protease inhibitor I20 (potato type II proteinase inhibitor) family.

This chain is Wound-induced proteinase inhibitor 2 (PIN2), found in Capsicum annuum (Capsicum pepper).